Here is a 141-residue protein sequence, read N- to C-terminus: Protein X (141 aa).

Positions 25-48 (SSGPSFPRPAAGSAASSASSPSPS) are enriched in low complexity. The segment at 25-52 (SSGPSFPRPAAGSAASSASSPSPSDESD) is disordered. Residues 68–113 (PCCLVFTCADLRTMDSTVNFVSWHANRQLGMPSKDLWTPYIKDQLL) are mitochondrial targeting sequence.

This sequence belongs to the orthohepadnavirus protein X family. As to quaternary structure, may form homodimer. May interact with host CEBPA, CFLAR, CREB1, DDB1, E4F1, HBXIP, HSPD1/HSP60, NFKBIA, POLR2E and SMAD4. Interacts with host SMC5-SMC6 complex and induces its degradation. Interacts with host TRPC4AP; leading to prevent ubiquitination of TRPC4AP. Interacts with host PLSCR1; this interaction promotes ubiquitination and degradation of HBx and impairs HBx-mediated cell proliferation. Post-translationally, a fraction may be phosphorylated in insect cells and HepG2 cells, a human hepatoblastoma cell line. Phosphorylated in vitro by host protein kinase C or mitogen-activated protein kinase. N-acetylated in insect cells.

It is found in the host cytoplasm. The protein resides in the host nucleus. Its subcellular location is the host mitochondrion. Multifunctional protein that plays a role in silencing host antiviral defenses and promoting viral transcription. Does not seem to be essential for HBV infection. May be directly involved in development of cirrhosis and liver cancer (hepatocellular carcinoma). Most of cytosolic activities involve modulation of cytosolic calcium. The effect on apoptosis is controversial depending on the cell types in which the studies have been conducted. May induce apoptosis by localizing in mitochondria and causing loss of mitochondrial membrane potential. May also modulate apoptosis by binding host CFLAR, a key regulator of the death-inducing signaling complex (DISC). Promotes viral transcription by using the host E3 ubiquitin ligase DDB1 to target the SMC5-SMC6 complex to proteasomal degradation. This host complex would otherwise bind to viral episomal DNA, and prevents its transcription. Moderately stimulates transcription of many different viral and cellular transcription elements. Promoters and enhancers stimulated by HBx contain DNA binding sites for NF-kappa-B, AP-1, AP-2, c-EBP, ATF/CREB, or the calcium-activated factor NF-AT. This chain is Protein X, found in Marmota monax (Woodchuck).